The chain runs to 558 residues: Kelch-like protein 23 (558 aa).

One can recognise a BTB domain in the interval 36-104 (TDITLQCPSG…AYTSQIEITK (69 aa)). In terms of domain architecture, BACK spans 139–240 (CIGMHSFAEF…DPVYLKTALG (102 aa)). Kelch repeat units lie at residues 274–320 (TMYI…CLGP), 321–369 (NIYV…TLGG), 370–416 (CVYA…VLHE), 418–466 (IYVI…PFEN), 467–508 (KLYL…IMNG), and 510–557 (IYVT…CVYN).

This is Kelch-like protein 23 (Klhl23) from Mus musculus (Mouse).